The following is a 602-amino-acid chain: MSVDSSSTHRRRCVAARLVRLAAAGAAVTVAVGTAAAWAHAGALQHRCVHDAMQARVRQSVADHHKAPGAVSAVGLPYVTLDAAHTAAAADPRPGSARSVVRDVNWGALRIAVSTEDLTDPAYHCARVGQHVKDHAGAIVTCTAEDILTNEKRDILVKHLIPQAVQLHTERLKVQQVQGKWKVTDMVGDICGDFKVPQAHITEGFSNTDFVMYVASVPSEEGVLAWATTCQTFSDGHPAVGVINIPAANIASRYDQLVTRVVTHEMAHALGFSGPFFEDARIVANVPNVRGKNFDVPVINSSTAVAKAREQYGCDTLEYLEVEDQGGAGSAGSHIKMRNAQDELMAPAAAAGYYTALTMAIFQDLGFYQADFSKAEVMPWGQNAGCAFLTNKCMEQSVTQWPAMFCNESEDAIRCPTSRLSLGACGVTRHPGLPPYWQYFTDPSLAGVSAFMDYCPVVVPYSDGSCTQRASEAHASLLPFNVFSDAARCIDGAFRPKATDGIVKSYAGLCANVQCDTATRTYSVQVHGSNDYTNCTPGLRVELSTVSNAFEGGGYITCPPYVEVCQGNVQAAKDGGNTAAGRRGPRAAATALLVAALLAVAL.

Positions M1–A39 are cleaved as a signal peptide. Positions H40–V100 are cleaved as a propeptide — activation peptide. Intrachain disulfides connect C125-C142 and C191-C230. H264 provides a ligand contact to Zn(2+). The active site involves E265. A Zn(2+)-binding site is contributed by H268. N300 carries N-linked (GlcNAc...) asparagine glycosylation. 7 cysteine pairs are disulfide-bonded: C314-C386, C393-C455, C406-C425, C415-C489, C466-C510, C515-C565, and C535-C558. A Zn(2+)-binding site is contributed by H334. The N-linked (GlcNAc...) asparagine glycan is linked to N407. N534 carries an N-linked (GlcNAc...) asparagine glycan. The GPI-anchor amidated asparagine moiety is linked to residue N577. Positions T578–L602 are cleaved as a propeptide — removed in mature form.

The protein belongs to the peptidase M8 family. Zn(2+) serves as cofactor. In terms of processing, the phosphatidylinositol moiety of the GPI-anchor contains a fully saturated, unbranched 1-O-alkyl chain (mainly C24:0) and a mixture of fully saturated unbranched 2-O-acyl chains (C12:0, C14:0, C16:0, and C18:0).

It localises to the cell membrane. It carries out the reaction Preference for hydrophobic residues at P1 and P1' and basic residues at P2' and P3'. A model nonapeptide is cleaved at -Ala-Tyr-|-Leu-Lys-Lys-.. Its function is as follows. Has an integral role during the infection of macrophages in the mammalian host. This is Leishmanolysin (gp63) from Leishmania major.